The following is an 887-amino-acid chain: Phosphatidylinositol 3-kinase catalytic subunit type 3 (887 aa).

Residues 35–184 (YKAVLEDPML…LAKLTKAHRQ (150 aa)) enclose the C2 PI3K-type domain. The disordered stretch occupies residues 149-170 (VEADGSEPTRTPGRTSSTLSED). The span at 156–170 (PTRTPGRTSSTLSED) shows a compositional bias: polar residues. A Phosphothreonine; by AMPK modification is found at T163. Position 165 is a phosphoserine; by AMPK (S165). S244, S261, and S282 each carry phosphoserine. Residues 283 to 520 (DHDLKPNATT…PKTHEMYLNV (238 aa)) form the PIK helical domain. Residues 416-467 (EPTKKDSQASVSESLSSSGVSSADIDSSQIITNPLPPVASPPPASKSKEVSD) are disordered. The segment covering 423-444 (QASVSESLSSSGVSSADIDSSQ) has biased composition (low complexity). Residues 449 to 459 (PLPPVASPPPA) show a composition bias toward pro residues. The 267-residue stretch at 605-871 (IPETATLFKS…LIDESVHALF (267 aa)) folds into the PI3K/PI4K catalytic domain. Positions 611-617 (LFKSALM) are G-loop. Residues 740 to 748 (GVGDRHLDN) are catalytic loop. The tract at residues 759–780 (HIDFGYILGRDPKPLPPPMKLN) is activation loop.

The protein belongs to the PI3/PI4-kinase family. As to quaternary structure, component of the PI3K (PI3KC3/PI3K-III/class III phosphatidylinositol 3-kinase) complex the core of which is composed of the catalytic subunit PIK3C3, the regulatory subunit PIK3R4 and BECN1 associating with additional regulatory/auxiliary subunits to form alternative complex forms. Alternative complex forms containing a fourth regulatory subunit in a mutually exclusive manner are: the PI3K complex I (PI3KC3-C1) containing ATG14, and the PI3K complex II (PI3KC3-C2) containing UVRAG. PI3KC3-C1 displays a V-shaped architecture with PIK3R4 serving as a bridge between PIK3C3 and the ATG14:BECN1 subcomplex. Both, PI3KC3-C1 and PI3KC3-C2, can associate with further regulatory subunits such as RUBCN, SH3GLB1/Bif-1 and AMBRA1. PI3KC3-C1 probably associates with PIK3CB. Interacts with RAB7A in the presence of PIK3R4. Interacts with AMBRA1. Interacts with BECN1P1/BECN2. Interacts with SLAMF1. May interact with DYN2. May be a component of a complex composed of RAB5A (in GDP-bound form), DYN2 and PIK3C3. Interacts with NCKAP1L. Interacts with ATG14; this interaction is increased in the absence of TMEM39A. Interacts with STEEP1; the interaction is STING1-dependent and required for trafficking of STING1 from the endoplasmic reticulum. Interacts with YWHAG. Interacts with ARMC3. It depends on Mn(2+) as a cofactor. Ubiquitinated via 'Lys-29'- and 'Lys-48'-linked ubiquitination by UBE3C, promoting its degradation. Deubiquitination by ZRANB1/TRABID promotes its stabilization, leading to autophagosome maturation.

The protein resides in the midbody. It localises to the late endosome. Its subcellular location is the cytoplasmic vesicle. The protein localises to the autophagosome. It carries out the reaction a 1,2-diacyl-sn-glycero-3-phospho-(1D-myo-inositol) + ATP = a 1,2-diacyl-sn-glycero-3-phospho-(1D-myo-inositol-3-phosphate) + ADP + H(+). Its function is as follows. Catalytic subunit of the PI3K complex that mediates formation of phosphatidylinositol 3-phosphate; different complex forms are believed to play a role in multiple membrane trafficking pathways: PI3KC3-C1 is involved in initiation of autophagosomes and PI3KC3-C2 in maturation of autophagosomes and endocytosis. As part of PI3KC3-C1, promotes endoplasmic reticulum membrane curvature formation prior to vesicle budding. Involved in regulation of degradative endocytic trafficking and required for the abscission step in cytokinesis, probably in the context of PI3KC3-C2. Involved in the transport of lysosomal enzyme precursors to lysosomes. Required for transport from early to late endosomes. This chain is Phosphatidylinositol 3-kinase catalytic subunit type 3, found in Rattus norvegicus (Rat).